The following is a 218-amino-acid chain: 23 kDa integral membrane protein (218 aa).

Over 1-12 (MATLGTGMRCLK) the chain is Cytoplasmic. A helical membrane pass occupies residues 13 to 36 (SCVFVLNIICLLCSLVLIGAGAYV). Over 37-55 (EVKFSQYGDNLHKVWQAAP) the chain is Extracellular. A helical transmembrane segment spans residues 56–71 (IAIIVVGVIILIVSFL). The Cytoplasmic segment spans residues 72–82 (GCCGAIKENVC). Residues 83–108 (MLYMYAFFLVVLLIAELAAAIVAVVY) traverse the membrane as a helical segment. Residues 109 to 183 (KDRIDSEIDA…SVFGAFLKRN (75 aa)) are Extracellular-facing. N-linked (GlcNAc...) asparagine glycosylation is present at N165. The helical transmembrane segment at 184–205 (LVIVACVAFGVCFFQLLSIVIA) threads the bilayer. Topologically, residues 206-218 (CCLGRQIKEYENV) are cytoplasmic.

The protein belongs to the tetraspanin (TM4SF) family.

The protein resides in the membrane. The protein is 23 kDa integral membrane protein of Schistosoma mansoni (Blood fluke).